The sequence spans 428 residues: Glutamate-1-semialdehyde 2,1-aminomutase (428 aa).

N6-(pyridoxal phosphate)lysine is present on lysine 265.

This sequence belongs to the class-III pyridoxal-phosphate-dependent aminotransferase family. HemL subfamily. In terms of assembly, homodimer. Pyridoxal 5'-phosphate is required as a cofactor.

It is found in the cytoplasm. It catalyses the reaction (S)-4-amino-5-oxopentanoate = 5-aminolevulinate. Its pathway is porphyrin-containing compound metabolism; protoporphyrin-IX biosynthesis; 5-aminolevulinate from L-glutamyl-tRNA(Glu): step 2/2. This is Glutamate-1-semialdehyde 2,1-aminomutase from Hamiltonella defensa subsp. Acyrthosiphon pisum (strain 5AT).